Here is a 506-residue protein sequence, read N- to C-terminus: Maturase K (506 aa).

It belongs to the intron maturase 2 family. MatK subfamily.

It localises to the plastid. The protein localises to the chloroplast. Usually encoded in the trnK tRNA gene intron. Probably assists in splicing its own and other chloroplast group II introns. This chain is Maturase K, found in Atractylodes lancea (Atractylodes japonica).